Reading from the N-terminus, the 134-residue chain is Lymphocyte antigen 6S (134 aa).

Positions M1–G26 are cleaved as a signal peptide. The region spanning R28 to C76 is the UPAR/Ly6 domain. Intrachain disulfides connect C29–C53, C32–C41, C76–C98, and C99–C104. N105 is lipidated: GPI-anchor amidated asparagine. The propeptide at A106–L134 is removed in mature form.

It is found in the cell membrane. The chain is Lymphocyte antigen 6S from Homo sapiens (Human).